A 493-amino-acid chain; its full sequence is Probable cytochrome P450 CYP36A1 (493 aa).

3 consecutive transmembrane segments (helical) span residues 1-21 (MLFA…CRFA), 60-80 (GGIF…YDML), and 290-310 (QLIV…IIVL). Cysteine 440 is a heme binding site.

This sequence belongs to the cytochrome P450 family. Heme is required as a cofactor.

The protein resides in the membrane. In terms of biological role, cytochromes P450 are a group of heme-thiolate monooxygenases. They oxidize a variety of structurally unrelated compounds, including steroids, fatty acids, and xenobiotics. The chain is Probable cytochrome P450 CYP36A1 (cyp-36A1) from Caenorhabditis elegans.